Consider the following 481-residue polypeptide: Tetratricopeptide repeat protein 29 (481 aa).

Over residues 1 to 18 (MASVGPVKTKTVTLKELT) the composition is skewed to low complexity. Positions 1–53 (MASVGPVKTKTVTLKELTPPIPSPEKSACKGAKPDSNHMALVPVKPSQPGSGK) are disordered. 6 TPR repeats span residues 191-224 (CERC…AMES), 231-264 (QEVR…AMAL), 271-310 (VEAN…SQRV), 317-350 (ADSL…ARAA), 357-390 (KRAS…SEKA), and 397-430 (YRAT…ARKL).

Interacts with TAX-1.

The protein resides in the cytoplasm. The protein localises to the cytoskeleton. Its subcellular location is the flagellum axoneme. Functionally, axonemal protein which is implicated in axonemal and/or peri-axonemal structure assembly and regulates flagellum assembly and beating. This chain is Tetratricopeptide repeat protein 29, found in Trypanosoma brucei brucei (strain 927/4 GUTat10.1).